The chain runs to 141 residues: Ribonuclease P protein component (141 aa).

2 disordered regions span residues 37 to 56 (RTEE…VGFT) and 114 to 141 (RRIT…VNGK). Positions 114-123 (RRITAKGERR) are enriched in basic and acidic residues.

Belongs to the RnpA family. Consists of a catalytic RNA component (M1 or rnpB) and a protein subunit.

It carries out the reaction Endonucleolytic cleavage of RNA, removing 5'-extranucleotides from tRNA precursor.. Functionally, RNaseP catalyzes the removal of the 5'-leader sequence from pre-tRNA to produce the mature 5'-terminus. It can also cleave other RNA substrates such as 4.5S RNA. The protein component plays an auxiliary but essential role in vivo by binding to the 5'-leader sequence and broadening the substrate specificity of the ribozyme. The chain is Ribonuclease P protein component from Brucella suis biovar 1 (strain 1330).